The sequence spans 81 residues: ATP synthase subunit c, chloroplastic (81 aa).

Helical transmembrane passes span Pro-3–Gly-23 and Leu-57–Ala-77.

This sequence belongs to the ATPase C chain family. F-type ATPases have 2 components, F(1) - the catalytic core - and F(0) - the membrane proton channel. F(1) has five subunits: alpha(3), beta(3), gamma(1), delta(1), epsilon(1). F(0) has four main subunits: a(1), b(1), b'(1) and c(10-14). The alpha and beta chains form an alternating ring which encloses part of the gamma chain. F(1) is attached to F(0) by a central stalk formed by the gamma and epsilon chains, while a peripheral stalk is formed by the delta, b and b' chains.

The protein resides in the plastid. It is found in the chloroplast thylakoid membrane. Its function is as follows. F(1)F(0) ATP synthase produces ATP from ADP in the presence of a proton or sodium gradient. F-type ATPases consist of two structural domains, F(1) containing the extramembraneous catalytic core and F(0) containing the membrane proton channel, linked together by a central stalk and a peripheral stalk. During catalysis, ATP synthesis in the catalytic domain of F(1) is coupled via a rotary mechanism of the central stalk subunits to proton translocation. Key component of the F(0) channel; it plays a direct role in translocation across the membrane. A homomeric c-ring of between 10-14 subunits forms the central stalk rotor element with the F(1) delta and epsilon subunits. The chain is ATP synthase subunit c, chloroplastic from Ceratophyllum demersum (Rigid hornwort).